The chain runs to 149 residues: Glucosamine 6-phosphate N-acetyltransferase (149 aa).

Residues 5 to 149 (FKIRKLEISD…KSIQMSKYFD (145 aa)) enclose the N-acetyltransferase domain. Residues Thr27, 75 to 78 (KFLR), and 87 to 89 (EDV) contribute to the substrate site. 97 to 102 (GKQLGK) serves as a coordination point for acetyl-CoA. 118 to 119 (YK) is a binding site for substrate. 132–134 (YEK) is a binding site for acetyl-CoA.

The protein belongs to the acetyltransferase family. GNA1 subfamily. In terms of assembly, homodimer. As to expression, expressed in roots, leaves, stems, cauline leaves, flowers and siliques.

The protein resides in the endoplasmic reticulum membrane. It catalyses the reaction D-glucosamine 6-phosphate + acetyl-CoA = N-acetyl-D-glucosamine 6-phosphate + CoA + H(+). Its pathway is nucleotide-sugar biosynthesis; UDP-N-acetyl-alpha-D-glucosamine biosynthesis; N-acetyl-alpha-D-glucosamine 1-phosphate from alpha-D-glucosamine 6-phosphate (route I): step 1/2. Acetyltransferase involved in UDP-N-acetylglucosamine (UDP-GlcNAc) biosynthesis. UDP-GlcNAc is an essential metabolite that serves as an initial sugar donor for N-glycan synthesis and thus plays an important role in protein and lipid glycosylation. This Arabidopsis thaliana (Mouse-ear cress) protein is Glucosamine 6-phosphate N-acetyltransferase (GNA1).